We begin with the raw amino-acid sequence, 159 residues long: Small ribosomal subunit protein bS6 (159 aa).

Residues selenocysteine 46 and selenocysteine 52 are each a non-standard amino acid (selenocysteine).

This sequence belongs to the bacterial ribosomal protein bS6 family.

Functionally, binds together with bS18 to 16S ribosomal RNA. In Desulfotalea psychrophila (strain LSv54 / DSM 12343), this protein is Small ribosomal subunit protein bS6.